A 238-amino-acid chain; its full sequence is Ethylene-responsive transcription factor ERN3 (238 aa).

Positions 24–81 (KFVGVRQRASGKWAAEIKDTSKNIRMWLGTYKTAEEAARAYDEAAFLLRGTNTRTNFS) form a DNA-binding region, AP2/ERF.

This sequence belongs to the AP2/ERF transcription factor family. ERF subfamily. As to expression, expressed in roots, root hairs and leaves.

The protein localises to the nucleus. In terms of biological role, transcription factor involved in symbiotic nodule signaling in response to rhizobial Nod factors (NFs). Binds to the GCC box (NF-responsive box) of ENOD11 promoter. May act as transcriptional repressor of NF-responsive box-containing target gene promoters in root hairs. The polypeptide is Ethylene-responsive transcription factor ERN3 (Medicago truncatula (Barrel medic)).